The primary structure comprises 1224 residues: MDSTGASQIVSALDVIYSPKSNNSQRQEAQKFLDEVKLCSESPFWGYEIALQNPTNSILKYFGLGLLDHAVKKNWNDYDEGKRVALRKWVMELNFGVQDYDTRYIKEKLATLWVEVAKRTWGEALKQTNPTEEQLLTSWVDMDNNLFELWNINQSSRELALIIFRILFEDVFLLDDLIVLKRMTVIQPLCVMIVCPIEVFAIKYKFSDKWTKFKANEEGWFSVWIPELNNALQQNNSEYIIRLLETLKTCLNWPLTEVIVRNDVLSSLLTCLSSNIPRAQSMALDSIHILLTRPYSNESHYQMTIDRVFDNMDLLDSVYESLLFDPTDDIDETKYPIIKKFVDMISCLYVCVPKIKETNGQIQKYFKLVLKTTYNPSLIVSGLTLDLWCTCLRNDEYLPKLEKYVIPDLLQFAADALVYYEQIDGHISKKFAEIDFQSKSEFQTFCSTYRKRIRDIIRLISCVELDLTYDWLNNRLNNYFSSPFGQQVLSSTFLDHKLEPYLGALSQYMIVECFINGCIRWKIWYPTGDDYDEKLDSILQKLEILSNQLIALNLREPLLLKKQIQNFALFLTMLKDNVLFTLLEKIITSATMDYPEINLEERGAESDAVRDLRYACGIELNRMALLMPESLKKIYPDLESVIARIMPNLSYHEKISFKSFLLIIVLKSSLDMKEERFAAIVDPELLAWSDKTTVVGLSDLHWFMERLGIVQIAEYFQRRDIDENSDLLSIPIDDEGKELKSELTKRWQSLFPVRATRMFIHYSMQSIKTDEEFKMLQDLWRPRIVPILPYITRLLYQLQSYHDPDNWKGLPTVVQSFVKYSTIERFWEAGASNKSKDEFIDEHMKAMQTLRDFADSVGHIIRYTREYTLLVLSAISSLGSVFYLLDESPDLLLNSIAIFKPGSNEISPGVSTHGWKHIMNIAIRPILKGCPKDCLGKFMPAFLPKLFEILDLLLCQKWSSHMNDMDMNPVPTDDDQMTEEILEENLLRQLTTVVVRIVIDCVGQGNANPNSAKSRLNNHQMEMRKIIFNDLNTLAPFLKLLNHLISFKDTKCSFNSILVMKCCLTSVLNQNNTVDEYFTFEVMKNLLLNVLCNSAFKDSFHEALYAFTVIFLTLCKEYPSARAFLFEISNGYNIDELYRNLRSVDEYKTQRALMIDFIDWVKSTSGKEDGNVDHAGDERKRQEKREAILKKANERLIKKNKENGDMLDDPNIEDGAVGNLFDDN.

A disordered region spans residues Asn1200–Asn1224.

Interacts with CEX1.

In Saccharomyces cerevisiae (strain ATCC 204508 / S288c) (Baker's yeast), this protein is Protein MSN5 (MSN5).